Consider the following 175-residue polypeptide: Endoribonuclease YbeY (175 aa).

Residues His-121, His-125, and His-131 each coordinate Zn(2+). A disordered region spans residues 154-175 (PDPYSPAQQESQAQPENTELNP). Residues 159–175 (PAQQESQAQPENTELNP) show a composition bias toward polar residues.

The protein belongs to the endoribonuclease YbeY family. It depends on Zn(2+) as a cofactor.

It is found in the cytoplasm. In terms of biological role, single strand-specific metallo-endoribonuclease involved in late-stage 70S ribosome quality control and in maturation of the 3' terminus of the 16S rRNA. The polypeptide is Endoribonuclease YbeY (Alcanivorax borkumensis (strain ATCC 700651 / DSM 11573 / NCIMB 13689 / SK2)).